Consider the following 368-residue polypeptide: Phosphoserine aminotransferase (368 aa).

R44 is a binding site for L-glutamate. Residues 78–79 (AT), W104, T157, D179, and Q202 each bind pyridoxal 5'-phosphate. K203 carries the N6-(pyridoxal phosphate)lysine modification. Residue 244-245 (NT) participates in pyridoxal 5'-phosphate binding.

Belongs to the class-V pyridoxal-phosphate-dependent aminotransferase family. SerC subfamily. In terms of assembly, homodimer. Pyridoxal 5'-phosphate is required as a cofactor.

It is found in the cytoplasm. The enzyme catalyses O-phospho-L-serine + 2-oxoglutarate = 3-phosphooxypyruvate + L-glutamate. It catalyses the reaction 4-(phosphooxy)-L-threonine + 2-oxoglutarate = (R)-3-hydroxy-2-oxo-4-phosphooxybutanoate + L-glutamate. The protein operates within amino-acid biosynthesis; L-serine biosynthesis; L-serine from 3-phospho-D-glycerate: step 2/3. It functions in the pathway cofactor biosynthesis; pyridoxine 5'-phosphate biosynthesis; pyridoxine 5'-phosphate from D-erythrose 4-phosphate: step 3/5. In terms of biological role, catalyzes the reversible conversion of 3-phosphohydroxypyruvate to phosphoserine and of 3-hydroxy-2-oxo-4-phosphonooxybutanoate to phosphohydroxythreonine. The polypeptide is Phosphoserine aminotransferase (Neisseria gonorrhoeae (strain ATCC 700825 / FA 1090)).